A 292-amino-acid chain; its full sequence is Putative rRNA 2'-O-methyltransferase fibrillarin 3 (292 aa).

The tract at residues 1–58 (MKPPQRGRGGGVRGGRGLARGGEGSAVRGSGRGGESGRGRGPGRVKSESDGGIKGGSK) is disordered. Gly residues predominate over residues 7–42 (GRGGGVRGGRGLARGGEGSAVRGSGRGGESGRGRGP). S-adenosyl-L-methionine-binding positions include 146-147 (YT), 165-166 (EH), 190-191 (DA), and 210-213 (DVNH).

It belongs to the methyltransferase superfamily. Fibrillarin family. As to quaternary structure, component of box C/D small nucleolar ribonucleoprotein (snoRNP) particles. In terms of tissue distribution, not detectable by RT-PCR.

It localises to the nucleus. The protein resides in the nucleolus. The catalysed reaction is L-glutaminyl-[histone H2A] + S-adenosyl-L-methionine = N(5)-methyl-L-glutaminyl-[histone H2A] + S-adenosyl-L-homocysteine + H(+). Its function is as follows. S-adenosyl-L-methionine-dependent methyltransferase that has the ability to methylate both RNAs and proteins. Involved in pre-rRNA processing. Utilizes the methyl donor S-adenosyl-L-methionine to catalyze the site-specific 2'-hydroxyl methylation of ribose moieties in pre-ribosomal RNA. Site specificity is provided by a guide RNA that base pairs with the substrate. Methylation occurs at a characteristic distance from the sequence involved in base pairing with the guide RNA. Also acts as a protein methyltransferase by mediating methylation of 'Gln-105' of histone H2A (H2AQ105me), a modification that impairs binding of the FACT complex and is specifically present at 35S ribosomal DNA locus. This Arabidopsis thaliana (Mouse-ear cress) protein is Putative rRNA 2'-O-methyltransferase fibrillarin 3 (FIB3).